A 173-amino-acid polypeptide reads, in one-letter code: Shikimate kinase (173 aa).

11 to 16 is a binding site for ATP; the sequence is GAGKTT. Residue T15 participates in Mg(2+) binding. Residues D33, R57, and G79 each contribute to the substrate site. Residue R118 participates in ATP binding. R140 provides a ligand contact to substrate.

Belongs to the shikimate kinase family. Monomer. Mg(2+) serves as cofactor.

The protein resides in the cytoplasm. The catalysed reaction is shikimate + ATP = 3-phosphoshikimate + ADP + H(+). The protein operates within metabolic intermediate biosynthesis; chorismate biosynthesis; chorismate from D-erythrose 4-phosphate and phosphoenolpyruvate: step 5/7. Its function is as follows. Catalyzes the specific phosphorylation of the 3-hydroxyl group of shikimic acid using ATP as a cosubstrate. This is Shikimate kinase from Parabacteroides distasonis (strain ATCC 8503 / DSM 20701 / CIP 104284 / JCM 5825 / NCTC 11152).